We begin with the raw amino-acid sequence, 263 residues long: Probable ribosomal RNA small subunit methyltransferase A (263 aa).

The S-adenosyl-L-methionine site is built by Leu-12, Gly-37, Glu-58, Asp-83, and Asn-100.

It belongs to the class I-like SAM-binding methyltransferase superfamily. rRNA adenine N(6)-methyltransferase family. RsmA subfamily.

It is found in the cytoplasm. Specifically dimethylates two adjacent adenosines in the loop of a conserved hairpin near the 3'-end of 16S rRNA in the 30S particle. May play a critical role in biogenesis of 30S subunits. The sequence is that of Probable ribosomal RNA small subunit methyltransferase A from Methanococcus maripaludis (strain C6 / ATCC BAA-1332).